Reading from the N-terminus, the 485-residue chain is Argininosuccinate lyase (485 aa).

Belongs to the lyase 1 family. Argininosuccinate lyase subfamily.

It is found in the cytoplasm. It catalyses the reaction 2-(N(omega)-L-arginino)succinate = fumarate + L-arginine. The protein operates within amino-acid biosynthesis; L-arginine biosynthesis; L-arginine from L-ornithine and carbamoyl phosphate: step 3/3. The polypeptide is Argininosuccinate lyase (Halobacterium salinarum (strain ATCC 29341 / DSM 671 / R1)).